Here is a 533-residue protein sequence, read N- to C-terminus: Probable nucleolar protein 5-2 (533 aa).

The Nop domain occupies 281-399 (IAPNLTALVG…LEARLRNLEG (119 aa)). Disordered regions lie at residues 401–433 (DLGR…ITPA) and 445–533 (GETS…KSKD). A compositionally biased stretch (basic and acidic residues) spans 413 to 424 (PKIEVYNKDKKM). Over residues 521-533 (KKDKKEKKKKSKD) the composition is skewed to basic residues.

The protein belongs to the NOP5/NOP56 family.

Its subcellular location is the nucleus. It localises to the nucleolus. In terms of biological role, required for 60S ribosomal subunit biogenesis. The sequence is that of Probable nucleolar protein 5-2 (NOP5-2) from Arabidopsis thaliana (Mouse-ear cress).